Reading from the N-terminus, the 134-residue chain is Global transcriptional regulator Spx (134 aa).

An intrachain disulfide couples C10 to C13.

This sequence belongs to the ArsC family. Spx subfamily. Interacts with the C-terminal domain of the alpha subunit of the RNAP.

The protein resides in the cytoplasm. Its function is as follows. Global transcriptional regulator that plays a key role in stress response and exerts either positive or negative regulation of genes. Acts by interacting with the C-terminal domain of the alpha subunit of the RNA polymerase (RNAP). This interaction can enhance binding of RNAP to the promoter region of target genes and stimulate their transcription, or block interaction of RNAP with activator. This is Global transcriptional regulator Spx from Streptococcus pyogenes serotype M6 (strain ATCC BAA-946 / MGAS10394).